Here is a 543-residue protein sequence, read N- to C-terminus: ABC transport system permease protein p69 (543 aa).

The next 12 helical transmembrane spans lie at 18-38 (IWYW…YSWI), 78-98 (AFFV…FSYW), 115-135 (ITIV…SNLF), 141-161 (ATLT…TTFF), 211-231 (TLLS…PLSI), 237-257 (LVLI…VVVF), 288-308 (IIFI…LVTI), 354-374 (ISLI…SCNL), 379-399 (FSIS…ILLF), 413-433 (IILV…SINF), 482-502 (LILF…NFFE), and 510-530 (GSVT…FLSV). Residues 74-256 (LAQTAFFVTG…TFLIFIEVVV (183 aa)) form the ABC transmembrane type-1 domain.

The protein belongs to the binding-protein-dependent transport system permease family.

The protein resides in the cell membrane. Functionally, probably part of a high-affinity transport system. The polypeptide is ABC transport system permease protein p69 (p69) (Mycoplasma genitalium (strain ATCC 33530 / DSM 19775 / NCTC 10195 / G37) (Mycoplasmoides genitalium)).